The primary structure comprises 683 residues: Receptor-like serine/threonine-protein kinase At2g45590 (683 aa).

The interval 1 to 21 (MPSRLSPPDIPPLQPTPTVSD) is disordered. Over 1–30 (MPSRLSPPDIPPLQPTPTVSDGHHRFQTLP) the chain is Extracellular. Residues 31–51 (LIIAGSLTLTGVLLILVTLLI) traverse the membrane as a helical segment. Residues 52 to 683 (YRRLYRNRTA…FPFKSRKKAR (632 aa)) are Cytoplasmic-facing. In terms of domain architecture, Protein kinase spans 92 to 664 (FSESTHLGHG…GVSEPPHLPF (573 aa)). Residues 98-106 (LGHGGFGSV) and Lys-121 each bind ATP. Asp-223 functions as the Proton acceptor in the catalytic mechanism. The segment at 406 to 436 (ERPSNNKEWINNGDGSSSVSKKKKKEKKRKP) is disordered. Residues 411 to 424 (NKEWINNGDGSSSV) are compositionally biased toward polar residues. Positions 425-436 (SKKKKKEKKRKP) are enriched in basic residues.

This sequence belongs to the protein kinase superfamily. Ser/Thr protein kinase family.

Its subcellular location is the cell membrane. The enzyme catalyses L-seryl-[protein] + ATP = O-phospho-L-seryl-[protein] + ADP + H(+). It carries out the reaction L-threonyl-[protein] + ATP = O-phospho-L-threonyl-[protein] + ADP + H(+). This is Receptor-like serine/threonine-protein kinase At2g45590 from Arabidopsis thaliana (Mouse-ear cress).